Here is a 197-residue protein sequence, read N- to C-terminus: Interleukin-17C (197 aa).

Positions 1–18 (MTLLPGLLFLTWLHTCLA) are cleaved as a signal peptide. 2 disulfide bridges follow: cysteine 129–cysteine 189 and cysteine 134–cysteine 191.

This sequence belongs to the IL-17 family. Binds to a heterodimer formed by IL17RA and IL17RE.

It localises to the secreted. Cytokine that plays a crucial role in innate immunity of the epithelium, including to intestinal bacterial pathogens, in an autocrine manner. Stimulates the production of antibacterial peptides and pro-inflammatory molecules for host defense by signaling through the NF-kappa-B and MAPK pathways. Acts synergically with IL22 in inducing the expression of antibacterial peptides, including S100A8, S100A9, REG3A and REG3G. Synergy is also observed with TNF and IL1B in inducing DEFB2 from keratinocytes. Depending on the type of insult, may have both protective and pathogenic properties, either by maintaining epithelial homeostasis after an inflammatory challenge or by promoting inflammatory phenotype. Enhanced IL17C/IL17RE signaling may also lead to greater susceptibility to autoimmune diseases. In Homo sapiens (Human), this protein is Interleukin-17C (IL17C).